The chain runs to 419 residues: Histidine--tRNA ligase (419 aa).

Belongs to the class-II aminoacyl-tRNA synthetase family. Homodimer.

It localises to the cytoplasm. It carries out the reaction tRNA(His) + L-histidine + ATP = L-histidyl-tRNA(His) + AMP + diphosphate + H(+). In Novosphingobium aromaticivorans (strain ATCC 700278 / DSM 12444 / CCUG 56034 / CIP 105152 / NBRC 16084 / F199), this protein is Histidine--tRNA ligase.